Reading from the N-terminus, the 204-residue chain is FMN-dependent NADH:quinone oxidoreductase 2 (204 aa).

Residues Ser-10 and 16–18 each bind FMN; that span reads SIS.

The protein belongs to the azoreductase type 1 family. Homodimer. The cofactor is FMN.

The enzyme catalyses 2 a quinone + NADH + H(+) = 2 a 1,4-benzosemiquinone + NAD(+). It carries out the reaction N,N-dimethyl-1,4-phenylenediamine + anthranilate + 2 NAD(+) = 2-(4-dimethylaminophenyl)diazenylbenzoate + 2 NADH + 2 H(+). Functionally, quinone reductase that provides resistance to thiol-specific stress caused by electrophilic quinones. Its function is as follows. Also exhibits azoreductase activity. Catalyzes the reductive cleavage of the azo bond in aromatic azo compounds to the corresponding amines. This Jannaschia sp. (strain CCS1) protein is FMN-dependent NADH:quinone oxidoreductase 2.